The following is an 854-amino-acid chain: Arsenate respiratory reductase molybdopterin-containing subunit ArrA (854 aa).

Residues 1-41 (MKKENQVNLGRRQLLKSTAAGTVLTGIGGTLSFTPIVEGIA) constitute a signal peptide (tat-type signal). The 57-residue stretch at 54–110 (GEWLATTCQGCTSWCAKQIYVMDGRALKVRGNPNSGVHGMSSCPRQHLSLQQVYDPD) folds into the 4Fe-4S Mo/W bis-MGD-type domain. 4 residues coordinate [4Fe-4S] cluster: C61, C64, C68, and C96. Position 165 (R165) interacts with arsenite. Y166 lines the arsenate pocket. H189 contacts arsenite. S190 contributes to the arsenate binding site. C193 contributes to the Mo-bis(molybdopterin guanine dinucleotide) binding site. K198 is a binding site for arsenate. Residue Y210 coordinates arsenite.

This sequence belongs to the prokaryotic molybdopterin-containing oxidoreductase family. As to quaternary structure, heterodimer composed of one large subunit (ArrA) and one small subunit (ArrB). It depends on [4Fe-4S] cluster as a cofactor. Requires Mo-bis(molybdopterin guanine dinucleotide) as cofactor. In terms of processing, predicted to be exported by the Tat system. The position of the signal peptide cleavage has not been experimentally proven.

The protein resides in the periplasm. It catalyses the reaction arsenite + A + H2O = arsenate + AH2 + H(+). Phosphate is a competitive inhibitor. Functionally, component of the arsenate respiratory reductase (Arr) complex, which catalyzes the reduction of arsenate (As(V)) to arsenite (As(III)). ArrA is the arsenate-binding subunit. The periplasmic localization of this complex may allow the cell to couple arsenate reduction to energy production before arsenate can be transported to the cell cytoplasm and enter the ars detoxification pathway, an energy-requiring process. This is Arsenate respiratory reductase molybdopterin-containing subunit ArrA from Shewanella sp. (strain ANA-3).